Here is a 442-residue protein sequence, read N- to C-terminus: Histidine--tRNA ligase (442 aa).

This sequence belongs to the class-II aminoacyl-tRNA synthetase family. Homodimer.

The protein localises to the cytoplasm. The catalysed reaction is tRNA(His) + L-histidine + ATP = L-histidyl-tRNA(His) + AMP + diphosphate + H(+). This chain is Histidine--tRNA ligase (hisS), found in Helicobacter pylori (strain J99 / ATCC 700824) (Campylobacter pylori J99).